Reading from the N-terminus, the 146-residue chain is Hemoglobin subunit beta-1 (146 aa).

The Globin domain maps to 2–146; sequence HWTAEEKALI…VAHALARRYH (145 aa). Residue histidine 92 participates in heme b binding.

This sequence belongs to the globin family. As to quaternary structure, heterotetramer of two alpha chains and two beta chains. In terms of tissue distribution, red blood cells.

Its function is as follows. Involved in oxygen transport from the lung to the various peripheral tissues. This Saara hardwickii (Indian spiny-tailed lizard) protein is Hemoglobin subunit beta-1.